The following is a 1128-amino-acid chain: Cordon-bleu protein-like 1 (1128 aa).

The segment at 1–35 (MDGRTPRPQDAPARRKPKAKAPLPPAETKYTDVSS) is disordered. Thr-139 carries the post-translational modification Phosphothreonine. 3 positions are modified to phosphoserine: Ser-204, Ser-222, and Ser-256. 3 disordered regions span residues 249–309 (KKRD…VPQD), 325–441 (MSVD…SPKS), and 454–499 (TLKN…TSNG). A Phosphothreonine modification is found at Thr-260. A compositionally biased stretch (polar residues) spans 270–286 (FTRSNTISKPYISNTLP). The residue at position 273 (Ser-273) is a Phosphoserine. Residue Thr-284 is modified to Phosphothreonine. Positions 291 to 296 (KKRRAP) match the KKRRAP 1 motif. Phosphoserine is present on residues Ser-326, Ser-333, Ser-344, and Ser-356. A compositionally biased stretch (polar residues) spans 345 to 357 (LQLSSMSAGNSSL). The KKRRAP 2 signature appears at 360–365 (TKRKAP). A compositionally biased stretch (polar residues) spans 397 to 415 (SEANSPEELSSPAGISSDY). Residues 416–425 (SLEEIDEKEE) are compositionally biased toward acidic residues. 5 positions are modified to phosphoserine: Ser-438, Ser-441, Ser-461, Ser-471, and Ser-474. The segment covering 475–488 (MEEKQETKSTDGQE) has biased composition (basic and acidic residues). 6 positions are modified to phosphoserine: Ser-563, Ser-584, Ser-786, Ser-813, Ser-814, and Ser-821. Disordered regions lie at residues 780-840 (TEDS…PFAP), 882-964 (SAAA…SQVS), 995-1081 (RSQS…PEQM), and 1103-1128 (IPSN…QDGH). The segment covering 899–908 (LTNKEAERDM) has biased composition (basic and acidic residues). 5 positions are modified to phosphoserine: Ser-911, Ser-917, Ser-947, Ser-1069, and Ser-1070. Composition is skewed to polar residues over residues 1045–1081 (SAHN…PEQM) and 1103–1122 (IPSN…SMSP). Positions 1081–1101 (MRQSLLTAIRSGEAAAKLKRV) constitute a WH2 domain. At Ser-1121 the chain carries Phosphoserine.

The sequence is that of Cordon-bleu protein-like 1 from Homo sapiens (Human).